Reading from the N-terminus, the 196-residue chain is Cyclin-dependent kinase inhibitor 6 (196 aa).

Disordered regions lie at residues 1–36 (MSER…PDSH) and 55–151 (ASDE…RKTP). Over residues 124–139 (SEGLGETTTEMESSSA) the composition is skewed to low complexity. At T152 the chain carries Phosphothreonine; by KIN10.

This sequence belongs to the CDI family. ICK/KRP subfamily. Specifically interacts with CDKA-1, but not with CDKB1-1. Interacts with CYCD1-1, CYCD4-1 and RHF1A. Binds to FBL17. Interacts with KIN10. Interacts with CYCD3-1. In terms of processing, ubiquitinated by RHF1A and SCF(FBL17). Ubiquitination leads to its subsequent degradation, thus controlling cell cycle progression. The phosphorylation at Thr-152 by KIN10 represses its activity. Expressed in newly formed organs such as the shoot apex. Expressed in cotyledon, primary root and marginal region of the leaves as well as in developing pollen.

Its subcellular location is the nucleus. The protein resides in the nucleoplasm. With respect to regulation, down-regulated by KIN10 under a phosphorylation-dependent manner. Functionally, binds and inhibits CYCD2-1/CDKA-1 complex kinase activity. Regulates cell division which is crucial for plant growth, development and morphogenesis. May inhibit CDK kinases specifically involved in the G1/S phase transition. In Arabidopsis thaliana (Mouse-ear cress), this protein is Cyclin-dependent kinase inhibitor 6 (KRP6).